The chain runs to 77 residues: Acyl carrier protein (77 aa).

Positions 2-77 (STIEERVKKI…EAIDYVVSHQ (76 aa)) constitute a Carrier domain. Ser37 carries the O-(pantetheine 4'-phosphoryl)serine modification.

This sequence belongs to the acyl carrier protein (ACP) family. Post-translationally, 4'-phosphopantetheine is transferred from CoA to a specific serine of apo-ACP by AcpS. This modification is essential for activity because fatty acids are bound in thioester linkage to the sulfhydryl of the prosthetic group.

It localises to the cytoplasm. The protein operates within lipid metabolism; fatty acid biosynthesis. In terms of biological role, carrier of the growing fatty acid chain in fatty acid biosynthesis. The protein is Acyl carrier protein of Oceanospirillum linum.